Reading from the N-terminus, the 304-residue chain is Polyisoprenyl-teichoic acid--peptidoglycan teichoic acid transferase TagU (304 aa).

Topologically, residues M1 to K3 are cytoplasmic. A helical; Signal-anchor for type II membrane protein transmembrane segment spans residues A4–I24. Residues Y25–S304 are Extracellular-facing.

It belongs to the LytR/CpsA/Psr (LCP) family.

Its subcellular location is the cell membrane. It functions in the pathway cell wall biogenesis. In terms of biological role, may catalyze the final step in cell wall teichoic acid biosynthesis, the transfer of the anionic cell wall polymers (APs) from their lipid-linked precursor to the cell wall peptidoglycan (PG). The sequence is that of Polyisoprenyl-teichoic acid--peptidoglycan teichoic acid transferase TagU from Halalkalibacterium halodurans (strain ATCC BAA-125 / DSM 18197 / FERM 7344 / JCM 9153 / C-125) (Bacillus halodurans).